Reading from the N-terminus, the 500-residue chain is Gamma-glutamylanilide synthase (500 aa).

Positions 32 to 136 (LGLEMIRLSW…MLADLHWKSG (105 aa)) constitute a GS beta-grasp domain. In terms of domain architecture, GS catalytic spans 143-500 (PRGIMKKAVK…WEQKEYFNLL (358 aa)).

The protein belongs to the glutamine synthetase family. As to quaternary structure, homohexamer.

It catalyses the reaction aniline + L-glutamate + ATP = N(5)-phenyl-L-glutamine + ADP + phosphate. Functionally, involved in the initial oxidation of aniline to catechol by the release of its amino group. Catalyzes the ATP-dependent ligation of L-glutamate to aniline to yield gamma-glutamylanilide (gamma-GA). AtdA1 has a broad substrate range and is able to convert the following anilines, including chlorinated and methylated forms of aniline: aniline (100%), o-chloroaniline (92%), m-chloroaniline (69%), p-chloroaniline (92%), o-methylaniline (40%), m-methylaniline (27%) and p-methylaniline (45%). The protein is Gamma-glutamylanilide synthase of Acinetobacter sp.